Consider the following 879-residue polypeptide: Alanine--tRNA ligase (879 aa).

Zn(2+)-binding residues include histidine 565, histidine 569, cysteine 674, and histidine 678.

The protein belongs to the class-II aminoacyl-tRNA synthetase family. Requires Zn(2+) as cofactor.

The protein resides in the cytoplasm. The enzyme catalyses tRNA(Ala) + L-alanine + ATP = L-alanyl-tRNA(Ala) + AMP + diphosphate. Its function is as follows. Catalyzes the attachment of alanine to tRNA(Ala) in a two-step reaction: alanine is first activated by ATP to form Ala-AMP and then transferred to the acceptor end of tRNA(Ala). Also edits incorrectly charged Ser-tRNA(Ala) and Gly-tRNA(Ala) via its editing domain. The sequence is that of Alanine--tRNA ligase from Gluconobacter oxydans (strain 621H) (Gluconobacter suboxydans).